Reading from the N-terminus, the 244-residue chain is CTD nuclear envelope phosphatase 1 (244 aa).

Residues 7–29 (LLGLRGFVAFAAKLWSFVLYLLR) traverse the membrane as a helical segment. The FCP1 homology domain occupies 57–224 (SQVKRKVLVL…LNLLPMLDAL (168 aa)).

This sequence belongs to the dullard family. Interacts with bmpr1a, bmpr1b and bmpr2.

It localises to the membrane. It is found in the cytoplasm. The protein localises to the perinuclear region. The catalysed reaction is O-phospho-L-seryl-[protein] + H2O = L-seryl-[protein] + phosphate. The enzyme catalyses O-phospho-L-threonyl-[protein] + H2O = L-threonyl-[protein] + phosphate. Functionally, serine/threonine protein phosphatase that may dephosphorylate and activate lipins. Lipins are phosphatidate phosphatases that catalyze the conversion of phosphatidic acid to diacylglycerol and control the metabolism of fatty acids at different levels. May indirectly modulate the lipid composition of nuclear and/or endoplasmic reticulum membranes and be required for proper nuclear membrane morphology and/or dynamics. May also indirectly regulate the production of lipid droplets and triacylglycerol. Induces neuronal differentiation by antagonizing BMP signaling. Acts both by dephosphorylating BMPR1A and by promoting BMPR2 proteasomal degradation. This chain is CTD nuclear envelope phosphatase 1 (ctdnep1), found in Xenopus tropicalis (Western clawed frog).